Here is a 786-residue protein sequence, read N- to C-terminus: Endonuclease MutS2 (786 aa).

Residue 332-339 (GPNTGGKT) participates in ATP binding. One can recognise a Smr domain in the interval 710–785 (VDLRGLDAEE…GDGVTMVELK (76 aa)).

It belongs to the DNA mismatch repair MutS family. MutS2 subfamily. As to quaternary structure, homodimer. Binds to stalled ribosomes, contacting rRNA.

Functionally, endonuclease that is involved in the suppression of homologous recombination and thus may have a key role in the control of bacterial genetic diversity. In terms of biological role, acts as a ribosome collision sensor, splitting the ribosome into its 2 subunits. Detects stalled/collided 70S ribosomes which it binds and splits by an ATP-hydrolysis driven conformational change. Acts upstream of the ribosome quality control system (RQC), a ribosome-associated complex that mediates the extraction of incompletely synthesized nascent chains from stalled ribosomes and their subsequent degradation. Probably generates substrates for RQC. The sequence is that of Endonuclease MutS2 from Clostridium beijerinckii (strain ATCC 51743 / NCIMB 8052) (Clostridium acetobutylicum).